Reading from the N-terminus, the 284-residue chain is Cytochrome P450 2C31 (284 aa).

C229 contacts heme.

This sequence belongs to the cytochrome P450 family. The cofactor is heme.

The protein localises to the endoplasmic reticulum membrane. The protein resides in the microsome membrane. It carries out the reaction an organic molecule + reduced [NADPH--hemoprotein reductase] + O2 = an alcohol + oxidized [NADPH--hemoprotein reductase] + H2O + H(+). Its function is as follows. Cytochromes P450 are a group of heme-thiolate monooxygenases. In liver microsomes, this enzyme is involved in an NADPH-dependent electron transport pathway. It oxidizes a variety of structurally unrelated compounds, including steroids, fatty acids, and xenobiotics. The polypeptide is Cytochrome P450 2C31 (CYP2C31) (Capra hircus aegagrus (Wild goat)).